Here is a 559-residue protein sequence, read N- to C-terminus: NAD-dependent malic enzyme 2 (559 aa).

Tyr98 acts as the Proton donor in catalysis. Residue Arg151 coordinates NAD(+). Lys169 functions as the Proton acceptor in the catalytic mechanism. A divalent metal cation is bound by residues Glu240, Asp241, and Asp264. Asp264 and Asn413 together coordinate NAD(+).

The protein belongs to the malic enzymes family. As to quaternary structure, homotetramer. Requires Mg(2+) as cofactor. The cofactor is Mn(2+).

The catalysed reaction is (S)-malate + NAD(+) = pyruvate + CO2 + NADH. It catalyses the reaction oxaloacetate + H(+) = pyruvate + CO2. This Vibrio vulnificus (strain YJ016) protein is NAD-dependent malic enzyme 2.